The sequence spans 247 residues: Sensory rhodopsin-1 (247 aa).

Over 1-4 (MTGA) the chain is Extracellular. A helical membrane pass occupies residues 5-26 (VSAAYWIAAVAFLVGLGITAAL). Topologically, residues 27–35 (YAKLGESED) are cytoplasmic. A helical membrane pass occupies residues 36 to 57 (RGRLAALAVIPGFAGLAYAGMA). Over 58–71 (LGIGTVTVNGAELV) the chain is Extracellular. A helical membrane pass occupies residues 72-93 (GLRYVDWIVTTPLLVGFIGYVA). The Cytoplasmic segment spans residues 94–96 (GAS). Residues 97–119 (RRAIAGVMLADALMIAFGAGAVV) traverse the membrane as a helical segment. The Extracellular portion of the chain corresponds to 120–123 (TGGT). A helical transmembrane segment spans residues 124-151 (LKWVLFGVSSIFHVTLFAYLYVVFPRAV). Topologically, residues 152–154 (PDD) are cytoplasmic. A helical transmembrane segment spans residues 155–182 (PMQRGLFSLLKNHVGLLWLAYPFVWLMG). Residues 183–190 (PAGIGFTT) lie on the Extracellular side of the membrane. The helical transmembrane segment at 191–223 (GVGAALTYAFLDVLAKVPYVYFFYARRQAFTDV) threads the bilayer. The residue at position 206 (Lys-206) is an N6-(retinylidene)lysine. Residues 224 to 247 (VSAATADREDATDAVGDGAPTAAD) are Cytoplasmic-facing.

The protein belongs to the archaeal/bacterial/fungal opsin family. In terms of assembly, interacts with HTR-I.

Its subcellular location is the cell membrane. Its function is as follows. Involved in the control of phototaxis. Mediates both photoattractant (in the orange light) and photophobic (in the near UV light) responses. The signal is then transmitted to the sensory rhodopsin I transducer (HTR-I). In Halobacterium sp. (strain SG1), this protein is Sensory rhodopsin-1 (sop1).